The primary structure comprises 23 residues: Unknown protein NF016 from 2D-PAGE (23 aa).

The polypeptide is Unknown protein NF016 from 2D-PAGE (Naegleria fowleri (Brain eating amoeba)).